Reading from the N-terminus, the 193-residue chain is HMG-Y-related protein A (193 aa).

The 71-residue stretch at 11 to 81 folds into the H15 domain; sequence PIPPYPEMIL…LKNNYFRAGA (71 aa). Residues 75–193 form a disordered region; sequence NYFRAGAPDA…PAVPSETAAA (119 aa). Residues 86 to 92 carry the Nuclear localization signal 1 (NLS) motif; sequence PKRGRGR. 4 DNA-binding regions (a.T hook) span residues 87–98, 113–124, 138–149, and 173–184; these read KRGRGRPPKARD, GRGRGRPPKAKS, PKPRGRPPKKAK, and KRGRGRPPKVRP. The Nuclear localization signal 2 (NLS) signature appears at 145-149; it reads PKKAK.

It belongs to the histone H1/H5 family. Post-translationally, phosphorylated by CDK, this phosphorylation prevents DNA-binding. Motility is increased when hypophosphorylated. Acetylated.

It is found in the nucleus. Its subcellular location is the nucleolus. In terms of biological role, binds A/T-rich DNA (e.g. present in the storage gamma-zein gene promoter) with a highly dynamic distribution into the nucleus. Probably involved in endosperm development, during cells shift from a mitotic cycle to endoreduplication leading to massive synthesis of storage proteins (zeins) and starch. The sequence is that of HMG-Y-related protein A from Zea mays (Maize).